We begin with the raw amino-acid sequence, 1561 residues long: ABC-type transporter phomO' (1561 aa).

A run of 7 helical transmembrane segments spans residues 34–54, 110–130, 139–159, 172–192, 202–222, 314–334, and 358–378; these read LYFE…LLAA, CTAG…CTTV, SVPA…LAHF, SSSL…APLV, GSAL…LIAV, LGLY…FTLA, and GLIG…GWYW. Residues 326 to 599 form the ABC transmembrane type-1 1 domain; the sequence is LCLAGFTLAQ…LLQIIPSFGA (274 aa). Asparagine 384 carries an N-linked (GlcNAc...) asparagine glycan. Transmembrane regions (helical) follow at residues 428 to 448, 452 to 472, 535 to 555, and 577 to 597; these read LAYA…TWML, VGPP…TSTY, LIVG…VLVF, and LIWI…IPSF. Residues 645 to 871 enclose the ABC transporter 1 domain; sequence IHNSSFSYTD…VEDENGDVDN (227 aa). A glycan (N-linked (GlcNAc...) asparagine) is linked at asparagine 647. 678 to 685 is a binding site for ATP; the sequence is GPAGCGKS. Asparagine 721 carries N-linked (GlcNAc...) asparagine glycosylation. Residues 853 to 899 are disordered; that stretch reads YQFPPSQADVEDENGDVDNGAENTRPRESSHTTEAQSGPPEPKSKPT. 4 helical membrane passes run 913–933, 969–989, 1037–1054, and 1147–1167; these read SIGF…AFCL, VLPL…IVPL, LFNT…VILI, and LVLN…AVGL. The ABC transmembrane type-1 2 domain occupies 920–1209; that stretch reads VLFIGGGIIF…LLTAWTSLET (290 aa). The N-linked (GlcNAc...) asparagine glycan is linked to asparagine 1189. Positions 1229 to 1238 are enriched in basic and acidic residues; it reads DVLVRPDSLD. The tract at residues 1229-1298 is disordered; it reads DVLVRPDSLD…DVAADGEKHE (70 aa). Acidic residues predominate over residues 1269 to 1280; the sequence is YDDDDESDENTD. Residues 1297 to 1545 enclose the ABC transporter 2 domain; it reads HEATTITTTS…SDIFAFFGRS (249 aa). Residue 1333–1340 participates in ATP binding; the sequence is GRTGSGKS. Asparagine 1496 carries N-linked (GlcNAc...) asparagine glycosylation.

Belongs to the ABC transporter superfamily. ABCC family. Conjugate transporter (TC 3.A.1.208) subfamily.

It is found in the membrane. In terms of biological role, ABC-type transporter; part of the gene cluster that mediates the biosynthesis of the phomopsins, a group of hexapeptide mycotoxins which infects lupins and causes lupinosis disease in livestock. This is ABC-type transporter phomO' from Diaporthe leptostromiformis (Lupinosis disease fungus).